The primary structure comprises 1687 residues: Muscle calcium channel subunit alpha-1 (1687 aa).

The interval 1–33 is disordered; sequence MDDAVCPTETDNVQNKQKATTPKRTQRRGGKQQ. Over 1-61 the chain is Cytoplasmic; the sequence is MDDAVCPTET…IFCIKIVDSK (61 aa). A compositionally biased stretch (polar residues) spans 9–23; that stretch reads ETDNVQNKQKATTPK. An I repeat occupies 48-330; sequence NPLRIFCIKI…LILGVLSGEF (283 aa). Residues 62 to 80 form a helical membrane-spanning segment; sequence LFEYFILLTIFANCVALAV. At 81-99 the chain is on the extracellular side; the sequence is YTPYPSGDSNITNQMLEKI. N90 carries an N-linked (GlcNAc...) asparagine glycan. A helical membrane pass occupies residues 100-117; it reads EYIFLVIFTSECVMKIIA. Residues 118-130 are Cytoplasmic-facing; that stretch reads YGFVLHTGSYLRN. Residues 131–145 traverse the membrane as a helical segment; the sequence is GWNFLDFFIVVIGMI. The Extracellular segment spans residues 146-157; it reads STALSNLVKEGF. A helical membrane pass occupies residues 158-176; that stretch reads DVKALRAFRVLRPLRLVSG. The Cytoplasmic segment spans residues 177–196; the sequence is VPSLQVVLNSILKAMIPLLH. A helical membrane pass occupies residues 197-216; sequence IALLVLFVIIIYAIIGLELF. At 217 to 302 the chain is on the extracellular side; the sequence is SGKLHKTCRH…SIQDAMGSSW (86 aa). E285 contributes to the Ca(2+) binding site. Residues 303-327 traverse the membrane as a helical segment; that stretch reads EWIYFVSMVILGAFFVMNLILGVLS. Residues 328 to 434 lie on the Cytoplasmic side of the membrane; sequence GEFSKERTKA…RACRKAVKSQ (107 aa). Residues 420-667 form an II repeat; the sequence is NRRIRRACRK…VFLAIAVDNL (248 aa). A helical transmembrane segment spans residues 435-454; that stretch reads AFYWLIILLVFLNTGVLATE. At 455 to 467 the chain is on the extracellular side; the sequence is HYRQPIWLDQFQE. Residues 468-487 traverse the membrane as a helical segment; it reads YTNIFFIALFTCEMILKMYS. Topologically, residues 488–496 are cytoplasmic; the sequence is LGFQGYFVS. The chain crosses the membrane as a helical span at residues 497 to 515; the sequence is LFNRFDCFVVIGSISEMVL. The Extracellular segment spans residues 516-525; sequence TSSELMAPLG. A helical transmembrane segment spans residues 526–544; sequence VSVLRCVRLLRVFKVTKYW. Over 545–563 the chain is Cytoplasmic; it reads HSLSNLVASLLNSIQSIAS. Residues 564-583 traverse the membrane as a helical segment; it reads LLLLLFLFIVIFGLLGMQVF. Residues 584–639 lie on the Extracellular side of the membrane; sequence GGRFTFKPEEEKPRSNFDSFYQSLLTVFQILTGEDWNVVMYDGIRAYGGVFSFGIV. Residue E617 participates in Ca(2+) binding. A helical transmembrane segment spans residues 640–664; the sequence is ACIYYIILFICGNYILLNVFLAIAV. The Cytoplasmic portion of the chain corresponds to 665–785; the sequence is DNLADADSLS…TNRFRIFCHR (121 aa). Residues 777-1059 form an III repeat; sequence NRFRIFCHRL…IFVGFVIVTF (283 aa). The helical transmembrane segment at 786–809 threads the bilayer; the sequence is LCNHSNFGNFILCCIMFSSAMLAA. Topologically, residues 810–826 are extracellular; it reads ENPLKADASRNIVLNKF. The chain crosses the membrane as a helical span at residues 827-846; it reads DYFFTAVFTIELVLKLISYG. Residues 847–854 are Cytoplasmic-facing; it reads FVLHDGAF. A helical transmembrane segment spans residues 855-877; that stretch reads CRSAFNLLDLLVVCVSLISIFFN. Residues 878–885 lie on the Extracellular side of the membrane; it reads SNAISVVK. A helical transmembrane segment spans residues 886–900; sequence ILRVLRVLRPLRAIN. Topologically, residues 901 to 921 are cytoplasmic; sequence RAKGLKHVVQCVIVAVKTIGN. The helical transmembrane segment at 922-941 threads the bilayer; the sequence is IVLVTCLLQFMFAVIGVQLF. Over 942-1030 the chain is Extracellular; sequence KGKFFSCSDG…NGGPIYNFRP (89 aa). Residues 979 to 1068 form a dihydropyridine binding region; that stretch reads REWKNNKFHF…FQNEGEQEYK (90 aa). A Ca(2+)-binding site is contributed by E1005. A helical membrane pass occupies residues 1031–1055; that stretch reads IVAAYYIIYIIIIAFFMVNIFVGFV. Over 1056–1110 the chain is Cytoplasmic; sequence IVTFQNEGEQEYKNCELDKNQRNCIEFALKAKPVRRYIPKHSIQYKVWWFVTSSS. An IV repeat occupies 1096-1370; the sequence is HSIQYKVWWF…LFVAVIMDNF (275 aa). A helical transmembrane segment spans residues 1111-1129; sequence FEYSIFVLIMINTVTLAMK. Over 1130 to 1143 the chain is Extracellular; sequence FYKQPEYYSEILDA. The helical transmembrane segment at 1144-1163 threads the bilayer; it reads LNMIFTAVFSLEFIFKLAAF. Residues 1164–1172 lie on the Cytoplasmic side of the membrane; the sequence is RFKNYFGDA. The helical transmembrane segment at 1173 to 1191 threads the bilayer; that stretch reads WNTFDFIIVLGSFIDIVYS. At 1192–1219 the chain is on the extracellular side; the sequence is EIKTKEQALATCDGQSCNKAKGGSTLIS. A helical transmembrane segment spans residues 1220-1238; that stretch reads INFFRLFRVMRLVKLLSKG. Residues 1239–1257 are Cytoplasmic-facing; the sequence is EGIRTLLWTFIKSFQALPY. A helical transmembrane segment spans residues 1258–1277; sequence VALLIVMLFFIYAVIGMQVF. The Extracellular portion of the chain corresponds to 1278-1343; the sequence is GKIMLEEGTS…AVNNCGSSIA (66 aa). The dihydropyridine binding stretch occupies residues 1327-1389; the sequence is KCDPESDAVN…LGPHHLDEFI (63 aa). Residues 1337–1378 are phenylalkylamine binding; it reads NCGSSIAFPYFISFYVLCSFLIINLFVAVIMDNFDYLTRDWS. A helical transmembrane segment spans residues 1344 to 1362; that stretch reads FPYFISFYVLCSFLIINLF. The Cytoplasmic segment spans residues 1363-1687; the sequence is VAVIMDNFDY…PKSKDKDEEF (325 aa).

This sequence belongs to the calcium channel alpha-1 subunit (TC 1.A.1.11) family. In terms of tissue distribution, predominantly expressed in the larval body wall musculature. In adults, highest expression in thorax followed by head and at a lower extent by abdomen.

It is found in the membrane. Its function is as follows. Voltage-sensitive calcium channels (VSCC) mediate the entry of calcium ions into excitable cells and are also involved in a variety of calcium-dependent processes, including muscle contraction, hormone or neurotransmitter release, gene expression, cell motility, cell division and cell death. MDL-alpha1 encodes a dihydropyridine- and diltiazem-sensitive current in larval body wall muscle. In Musca domestica (House fly), this protein is Muscle calcium channel subunit alpha-1.